The sequence spans 246 residues: Exosome complex component Rrp41 (246 aa).

The protein belongs to the RNase PH family. Rrp41 subfamily. As to quaternary structure, component of the archaeal exosome complex. Forms a hexameric ring-like arrangement composed of 3 Rrp41-Rrp42 heterodimers. The hexameric ring associates with a trimer of Rrp4 and/or Csl4 subunits.

The protein localises to the cytoplasm. In terms of biological role, catalytic component of the exosome, which is a complex involved in RNA degradation. Has 3'-&gt;5' exoribonuclease activity. Can also synthesize heteromeric RNA-tails. The polypeptide is Exosome complex component Rrp41 (Pyrobaculum calidifontis (strain DSM 21063 / JCM 11548 / VA1)).